Reading from the N-terminus, the 130-residue chain is Chaperone protein SycT (130 aa).

In terms of assembly, binds to YopT.

Functionally, functions as a specific chaperone for YopT. The polypeptide is Chaperone protein SycT (sycT) (Yersinia enterocolitica serotype O:8 / biotype 1B (strain NCTC 13174 / 8081)).